The primary structure comprises 209 residues: MARYTGPQCKLCRREGMKLYLKGERCFTDKCAFDRRPFAPGDHGREKKKLTQYGIQLRAKQTMKRIYGVLEAQFRRYYEKAAKKSGDTRENLVVQVERRLDNVVYRLGFAVNRTTARQLVSHGHFLVNGKKVNIPSYQVRPGDVIEVREKSKDILPIKNAIELNKDKNRMPWLSVDFENYKGVYERHPKLEEVIDLPVDVQAIIELYSR.

The S4 RNA-binding domain maps to 98 to 164 (RRLDNVVYRL…LPIKNAIELN (67 aa)).

Belongs to the universal ribosomal protein uS4 family. As to quaternary structure, part of the 30S ribosomal subunit. Contacts protein S5. The interaction surface between S4 and S5 is involved in control of translational fidelity.

Functionally, one of the primary rRNA binding proteins, it binds directly to 16S rRNA where it nucleates assembly of the body of the 30S subunit. In terms of biological role, with S5 and S12 plays an important role in translational accuracy. The sequence is that of Small ribosomal subunit protein uS4 from Thermosipho melanesiensis (strain DSM 12029 / CIP 104789 / BI429).